A 121-amino-acid polypeptide reads, in one-letter code: B-box domain protein 31 (121 aa).

The B box-type; atypical zinc-finger motif lies at 26–72 (SVPVRCELCDGDASVFCEADSAFLCRKCDRWVHGANFLAWRHVRRVL). Positions 117–121 (PFVFL) match the PFVFL motif.

Highly expressed in shoot apical meristems and in vascular tissues of leaves. Also detected in petioles.

Its function is as follows. Developmental regulator acting by forming heterodimeric complexes, that sequester CO and CO-like (COL) proteins into non-functional complexes. Involved in the CO-mediated long-day flowering-promotion pathway. Engages CO and the transcriptional repressor TPL in a tripartite complex. The polypeptide is B-box domain protein 31 (Arabidopsis thaliana (Mouse-ear cress)).